A 190-amino-acid polypeptide reads, in one-letter code: Recombination protein RecR (190 aa).

The C4-type zinc-finger motif lies at 58–73; it reads CEQCGALSENELCEIC. In terms of domain architecture, Toprim spans 81–167; that stretch reads NILCIVESPK…TFSKIAQGIP (87 aa).

It belongs to the RecR family.

In terms of biological role, may play a role in DNA repair. It seems to be involved in an RecBC-independent recombinational process of DNA repair. It may act with RecF and RecO. The sequence is that of Recombination protein RecR from Campylobacter jejuni subsp. doylei (strain ATCC BAA-1458 / RM4099 / 269.97).